We begin with the raw amino-acid sequence, 164 residues long: Phosphopantetheine adenylyltransferase (164 aa).

Ser-9 serves as a coordination point for substrate. Residues Ser-9 to Phe-10 and His-17 contribute to the ATP site. Substrate-binding residues include Lys-41, Leu-73, and Lys-87. Residues Gly-88–Arg-90, Glu-98, and Tyr-122–Ser-128 contribute to the ATP site.

Belongs to the bacterial CoaD family. Homohexamer. The cofactor is Mg(2+).

It localises to the cytoplasm. The enzyme catalyses (R)-4'-phosphopantetheine + ATP + H(+) = 3'-dephospho-CoA + diphosphate. The protein operates within cofactor biosynthesis; coenzyme A biosynthesis; CoA from (R)-pantothenate: step 4/5. Its function is as follows. Reversibly transfers an adenylyl group from ATP to 4'-phosphopantetheine, yielding dephospho-CoA (dPCoA) and pyrophosphate. The protein is Phosphopantetheine adenylyltransferase of Rhodococcus opacus (strain B4).